Here is a 265-residue protein sequence, read N- to C-terminus: Methylthioribulose-1-phosphate dehydratase (265 aa).

C118 serves as a coordination point for substrate. Residues H136 and H138 each coordinate Zn(2+). Residue E161 is the Proton donor/acceptor of the active site. H226 contacts Zn(2+).

Belongs to the aldolase class II family. MtnB subfamily. The cofactor is Zn(2+).

It is found in the cytoplasm. The catalysed reaction is 5-(methylsulfanyl)-D-ribulose 1-phosphate = 5-methylsulfanyl-2,3-dioxopentyl phosphate + H2O. Its pathway is amino-acid biosynthesis; L-methionine biosynthesis via salvage pathway; L-methionine from S-methyl-5-thio-alpha-D-ribose 1-phosphate: step 2/6. Catalyzes the dehydration of methylthioribulose-1-phosphate (MTRu-1-P) into 2,3-diketo-5-methylthiopentyl-1-phosphate (DK-MTP-1-P). The protein is Methylthioribulose-1-phosphate dehydratase of Scheffersomyces stipitis (strain ATCC 58785 / CBS 6054 / NBRC 10063 / NRRL Y-11545) (Yeast).